The sequence spans 492 residues: Glutamyl-tRNA(Gln) amidotransferase subunit A (492 aa).

Catalysis depends on charge relay system residues K78 and S158. S182 serves as the catalytic Acyl-ester intermediate.

Belongs to the amidase family. GatA subfamily. In terms of assembly, heterotrimer of A, B and C subunits.

It carries out the reaction L-glutamyl-tRNA(Gln) + L-glutamine + ATP + H2O = L-glutaminyl-tRNA(Gln) + L-glutamate + ADP + phosphate + H(+). Allows the formation of correctly charged Gln-tRNA(Gln) through the transamidation of misacylated Glu-tRNA(Gln) in organisms which lack glutaminyl-tRNA synthetase. The reaction takes place in the presence of glutamine and ATP through an activated gamma-phospho-Glu-tRNA(Gln). This chain is Glutamyl-tRNA(Gln) amidotransferase subunit A, found in Rhodopseudomonas palustris (strain BisB18).